The following is an 833-amino-acid chain: Leucine--tRNA ligase (833 aa).

The 'HIGH' region signature appears at P41–H52. The 'KMSKS' region motif lies at K610–S614. K613 lines the ATP pocket.

It belongs to the class-I aminoacyl-tRNA synthetase family.

It is found in the cytoplasm. The catalysed reaction is tRNA(Leu) + L-leucine + ATP = L-leucyl-tRNA(Leu) + AMP + diphosphate. This Streptococcus pyogenes serotype M3 (strain ATCC BAA-595 / MGAS315) protein is Leucine--tRNA ligase.